The following is a 320-amino-acid chain: Heterogeneous nuclear ribonucleoprotein A1 (320 aa).

An N-acetylmethionine modification is found at Met-1. Ser-2 carries the N-acetylserine; in Heterogeneous nuclear ribonucleoprotein A1, N-terminally processed modification. Ser-2 is subject to Phosphoserine. Lys-3 carries the N6-acetyllysine; alternate modification. A Glycyl lysine isopeptide (Lys-Gly) (interchain with G-Cter in SUMO2); alternate cross-link involves residue Lys-3. Phosphoserine occurs at positions 4 and 6. Residues 4–94 form a globular A domain region; sequence SESPKEPEQL…EPKRAVSRED (91 aa). Residue Lys-8 forms a Glycyl lysine isopeptide (Lys-Gly) (interchain with G-Cter in SUMO2) linkage. 2 consecutive RRM domains span residues 14–97 and 105–184; these read RKLF…DSQR and KKIF…LCKQ. Ser-22 carries the post-translational modification Phosphoserine. Lys-78 is covalently cross-linked (Glycyl lysine isopeptide (Lys-Gly) (interchain with G-Cter in SUMO2)). The globular B domain stretch occupies residues 95–185; the sequence is SQRPGAHLTV…EVRKALCKQE (91 aa). Residue Lys-113 forms a Glycyl lysine isopeptide (Lys-Gly) (interchain with G-Cter in SUMO) linkage. Glycyl lysine isopeptide (Lys-Gly) (interchain with G-Cter in SUMO2) cross-links involve residues Lys-179 and Lys-183. The segment at 188–216 is disordered; sequence SASSSQRGRSGSGNFGGGRGGGFGGNDNF. Residue Ser-192 is modified to Phosphoserine; by MKNK2. At Arg-194 the chain carries Asymmetric dimethylarginine; alternate. Position 194 is a dimethylated arginine; alternate (Arg-194). Arg-194 is modified (omega-N-methylarginine; alternate). The segment covering 197–216 has biased composition (gly residues); that stretch reads SGSGNFGGGRGGGFGGNDNF. Position 199 is a phosphoserine (Ser-199). An asymmetric dimethylarginine; alternate mark is found at Arg-206, Arg-218, Arg-225, and Arg-232. Dimethylated arginine; alternate is present on Arg-206. An omega-N-methylarginine; alternate mark is found at Arg-206, Arg-218, Arg-225, and Arg-232. Residues 218–240 are RNA-binding RGG-box; the sequence is RGGNFSGRGGFGGSRGGGGYGGS. Dimethylated arginine; alternate is present on Arg-225. A nuclear targeting sequence region spans residues 268-305; that stretch reads NQSSNFGPMKGGNFGGRSSGPYGGGGQYFAKPRNQGGY. A disordered region spans residues 271 to 320; it reads SNFGPMKGGNFGGRSSGPYGGGGQYFAKPRNQGGYGGSSSSSSYGSGRRF. Residues 276–294 are compositionally biased toward gly residues; the sequence is MKGGNFGGRSSGPYGGGGQ. The residue at position 284 (Arg-284) is an Omega-N-methylarginine. Phosphoserine is present on Ser-285. Lys-298 bears the N6-acetyllysine; alternate mark. Lys-298 is covalently cross-linked (Glycyl lysine isopeptide (Lys-Gly) (interchain with G-Cter in SUMO2); alternate). Omega-N-methylarginine is present on Arg-300. Over residues 308–320 the composition is skewed to low complexity; it reads SSSSSSYGSGRRF. The residue at position 309 (Ser-309) is a Phosphoserine. Phosphoserine; by MKNK2 occurs at positions 310, 311, and 312. A phosphoserine mark is found at Ser-313 and Ser-316. Arg-318 is modified (omega-N-methylarginine).

In terms of assembly, identified in the spliceosome C complex. Identified in a IGF2BP1-dependent mRNP granule complex containing untranslated mRNAs. Interacts with SEPT6. Interacts with C9orf72. Interacts with KHDRBS1. Interacts with UBQLN2. Interacts with PPIA/CYPA. In terms of processing, sumoylated.

Its subcellular location is the nucleus. The protein resides in the cytoplasm. Its function is as follows. Involved in the packaging of pre-mRNA into hnRNP particles, transport of poly(A) mRNA from the nucleus to the cytoplasm and modulation of splice site selection. Plays a role in the splicing of pyruvate kinase PKM by binding repressively to sequences flanking PKM exon 9, inhibiting exon 9 inclusion and resulting in exon 10 inclusion and production of the PKM M2 isoform. Binds to the IRES and thereby inhibits the translation of the apoptosis protease activating factor APAF1. May bind to specific miRNA hairpins. The sequence is that of Heterogeneous nuclear ribonucleoprotein A1 (Hnrnpa1) from Rattus norvegicus (Rat).